Consider the following 108-residue polypeptide: Transmembrane protein 265 (108 aa).

The next 2 helical transmembrane spans lie at 34-54 and 78-98; these read AATS…VFAI and LILA…LLLW.

This sequence belongs to the CD225/Dispanin family.

The protein resides in the membrane. The polypeptide is Transmembrane protein 265 (Homo sapiens (Human)).